The primary structure comprises 308 residues: Ceramide synthase 1 LOH3 (308 aa).

A run of 6 helical transmembrane segments spans residues 25-45 (VLPLFAVFFPSIRFLLDRFVF), 82-102 (CVYYLSAEILALSVTYNEPWF), 128-148 (LLYMFVAGFYTYSIFALVFWE), 154-174 (FGVSMGHHIATLILIVLSYVC), 213-233 (FILFVLSWIILRLIYYPFWIL), and 258-278 (YMFNTLLYCLLVLHIYWWVLM). The TLC domain maps to 73-287 (RKFKESAWKC…MYRMLVKQIQ (215 aa)). Residues S298 and S300 each carry the phosphoserine modification.

Expressed ubiquitously at low levels. Not observed in pollen.

The protein resides in the endoplasmic reticulum membrane. It catalyses the reaction (4R)-hydroxysphinganine + a fatty acyl-CoA = an N-acyl-(4R)-4-hydroxysphinganine + CoA + H(+). The enzyme catalyses a sphingoid base + tetracosanoyl-CoA = an N-tetracosanoyl-sphingoid base + CoA + H(+). The catalysed reaction is (4R)-hydroxysphinganine + hexadecanoyl-CoA = N-hexadecanoyl-(4R)-hydroxysphinganine + CoA + H(+). It carries out the reaction (4R)-hydroxysphinganine + octadecanoyl-CoA = N-octadecanoyl-(4R)-hydroxysphinganine + CoA + H(+). It catalyses the reaction (4R)-hydroxysphinganine + eicosanoyl-CoA = N-eicosanoyl-(4R)-hydroxysphinganine + CoA + H(+). The enzyme catalyses docosanoyl-CoA + (4R)-hydroxysphinganine = N-docosanoyl-(4R)-hydroxysphinganine + CoA + H(+). The catalysed reaction is hexacosanoyl-CoA + (4R)-hydroxysphinganine = N-hexacosanoyl-(4R)-hydroxysphinganine + CoA + H(+). It carries out the reaction tetracosanoyl-CoA + (4R)-hydroxysphinganine = N-tetracosanoyl-(4R)-hydroxysphinganine + CoA + H(+). It catalyses the reaction tetracosanoyl-CoA + sphing-4-enine = N-tetracosanoyl-sphing-4-enine + CoA + H(+). The enzyme catalyses sphinga-(4E,8Z)-dienine + tetracosanoyl-CoA = N-tetracosanoylsphinga-(4E,8Z)-dienine + CoA + H(+). The catalysed reaction is sphinga-(4E,8E)-dienine + tetracosanoyl-CoA = N-tetracosanoylsphinga-(4E,8E)-dienine + CoA + H(+). It carries out the reaction (4R)-hydroxysphing-(8Z)-enine + tetracosanoyl-CoA = N-tetracosanoyl-(4R)-hydroxysphing-(8Z)-enine + CoA + H(+). It catalyses the reaction (4R)-hydroxysphing-(8E)-enine + tetracosanoyl-CoA = N-tetracosanoyl-(4R)-hydroxysphing-(8E)-enine + CoA + H(+). The protein operates within sphingolipid metabolism. Its activity is regulated as follows. Inhibited by the mycotoxin fumonisin B(1), a sphingosine analog mycotoxins produced by pathogenic fungi. Repressed by divalent cation such as magnesium Mg(2+), copper Cu(2+), zinc Zn(2+), manganese Mn(2+), calcium Ca(2+) and cobalt Co(2+). Essential for plant growth, promotes cell division in root meristems. Catalyzes the biosynthesis of ceramide sphingolipids with C(16) to C(28) fatty acids, structural membrane lipids involved in membrane trafficking (e.g. early endosomes) and cell polarity (e.g. polar auxin transport related proteins); active on a broad substrate spectrum, both regarding chain lengths of fatty acids and the sphingoid base, such as long-chain base (LCB) phytosphingosine (t18:0). Mediates resistance to sphinganine-analog mycotoxins (SAMs, e.g. fumonisin B(1)) by restoring the sphingolipid biosynthesis. Could salvage the transport of GPI-anchored proteins from the endoplasmic reticulum to the Golgi apparatus in ceramides-depleted cells after SAM exposure. Contributes to hypoxic conditions tolerance (e.g. submergences), especially in the dark, by promoting the formation of very-long-chain (VLC) ceramide species (22:1, 24:1 and 26:1) and of VLC unsaturated ceramides, which are modulating CTR1-mediated ethylene signaling leading to endoplasmic reticulum (ER)-to-nucleus translocation of EIN2 and EIN3. This chain is Ceramide synthase 1 LOH3, found in Arabidopsis thaliana (Mouse-ear cress).